Consider the following 97-residue polypeptide: Large ribosomal subunit protein uL23 (97 aa).

It belongs to the universal ribosomal protein uL23 family. In terms of assembly, part of the 50S ribosomal subunit. Contacts protein L29, and trigger factor when it is bound to the ribosome.

In terms of biological role, one of the early assembly proteins it binds 23S rRNA. One of the proteins that surrounds the polypeptide exit tunnel on the outside of the ribosome. Forms the main docking site for trigger factor binding to the ribosome. This chain is Large ribosomal subunit protein uL23, found in Brucella anthropi (strain ATCC 49188 / DSM 6882 / CCUG 24695 / JCM 21032 / LMG 3331 / NBRC 15819 / NCTC 12168 / Alc 37) (Ochrobactrum anthropi).